The sequence spans 387 residues: Ubiquitin-conjugating enzyme E2 25 (387 aa).

Residues 117–164 are disordered; the sequence is APPVRDDIDEGRGSDISDTTSEPIDDDMAGDGEVDDDDEEEEDDEDAD. A compositionally biased stretch (basic and acidic residues) spans 120–131; sequence VRDDIDEGRGSD. Acidic residues predominate over residues 139–164; it reads PIDDDMAGDGEVDDDDEEEEDDEDAD. In terms of domain architecture, UBC core spans 214-380; it reads TATDRLMKEI…QQIHAKSGWY (167 aa). Cysteine 315 (glycyl thioester intermediate) is an active-site residue.

This sequence belongs to the ubiquitin-conjugating enzyme family. As to expression, in the embryo, expressed in precursor neuron and muscle cells and in other cells such as hypodermal cells. After hatching of L1 larvae and in all subsequent stages, strongest expression in pharyngeal muscle and anal muscle cells. In L4 larvae and adolescent hermaphrodites, also expressed in the vulval muscles. Expression also detected in all four nerve cords and in neurons with weaker levels in all body wall muscles.

Its subcellular location is the cytoplasm. The protein localises to the nucleus. The catalysed reaction is S-ubiquitinyl-[E1 ubiquitin-activating enzyme]-L-cysteine + [E2 ubiquitin-conjugating enzyme]-L-cysteine = [E1 ubiquitin-activating enzyme]-L-cysteine + S-ubiquitinyl-[E2 ubiquitin-conjugating enzyme]-L-cysteine.. The protein operates within protein modification; protein ubiquitination. In terms of biological role, catalyzes the covalent attachment of ubiquitin to other proteins (Potential). Required for the maintenance of neuromuscular function. The polypeptide is Ubiquitin-conjugating enzyme E2 25 (Caenorhabditis elegans).